Consider the following 200-residue polypeptide: Regulator of G-protein signaling 16 (200 aa).

Residues cysteine 2 and cysteine 12 are each lipidated (S-palmitoyl cysteine). In terms of domain architecture, RGS spans 65-181; sequence SFDLLLSSKN…LKSPAYRDLA (117 aa). A phosphotyrosine mark is found at tyrosine 168 and tyrosine 177.

As to quaternary structure, interacts with GNAI1 and GNAQ. Interacts with GNAI3, GNAI3 and GNAO1. In terms of assembly, (Microbial infection) Interacts with porcine circovirus 2 ORF3 protein. Post-translationally, palmitoylated on Cys-2 and/or Cys-12. In terms of processing, phosphorylated. Phosphorylation at Tyr-168 by EGFR enhances GTPase accelerating (GAP) activity toward GNAI1.

Its subcellular location is the membrane. Regulates G protein-coupled receptor signaling cascades. Inhibits signal transduction by increasing the GTPase activity of G protein alpha subunits, thereby driving them into their inactive GDP-bound form. Plays an important role in the phototransduction cascade by regulating the lifetime and effective concentration of activated transducin alpha. May regulate extra and intracellular mitogenic signals. Functionally, (Microbial infection) Gets inactivated and/or degraded by porcine circovirus 2 ORF3 protein, leading to enhanced expression of IL-6 and IL-8 in infected lymphocytes. This would explain chronic inflammatory response of PCV2 infected pigs. This chain is Regulator of G-protein signaling 16 (RGS16), found in Sus scrofa (Pig).